The chain runs to 164 residues: Peptide methionine sulfoxide reductase MsrA (164 aa).

Cys16 is an active-site residue.

It belongs to the MsrA Met sulfoxide reductase family.

The enzyme catalyses L-methionyl-[protein] + [thioredoxin]-disulfide + H2O = L-methionyl-(S)-S-oxide-[protein] + [thioredoxin]-dithiol. It catalyses the reaction [thioredoxin]-disulfide + L-methionine + H2O = L-methionine (S)-S-oxide + [thioredoxin]-dithiol. Its function is as follows. Has an important function as a repair enzyme for proteins that have been inactivated by oxidation. Catalyzes the reversible oxidation-reduction of methionine sulfoxide in proteins to methionine. The protein is Peptide methionine sulfoxide reductase MsrA of Methanoculleus marisnigri (strain ATCC 35101 / DSM 1498 / JR1).